The following is a 179-amino-acid chain: FAD-dependent monooxygenase nscC (179 aa).

Positions 1-21 (MGKQQETILIIGAGISGLATS) are cleaved as a signal peptide. FAD contacts are provided by Glu35 and Ala46. The N-linked (GlcNAc...) asparagine glycan is linked to Asn92. Position 119 (Arg119) interacts with FAD. The N-linked (GlcNAc...) asparagine glycan is linked to Asn170.

It belongs to the paxM FAD-dependent monooxygenase family. FAD serves as cofactor.

It functions in the pathway secondary metabolite biosynthesis. Functionally, FAD-dependent monooxygenase; part of the gene cluster that mediates the biosynthesis of neosartoricin B, a prenylated anthracenone that probably exhibits T-cell antiproliferative activity, suggestive of a physiological role as an immunosuppressive agent. The non-reducing polyketide synthase nscA probably synthesizes and cyclizes the decaketide backbone. The hydrolase nscB then mediates the product release through hydrolysis followed by spontaneous decarboxylation. The prenyltransferase nscD catalyzes the addition of the dimethylallyl group to the aromatic C5. The FAD-dependent monooxygenase nscC is then responsible for the stereospecific hydroxylation at C2. Neosartoricin B can be converted into two additional compounds neosartoricins C and D. Neosartoricin C is a spirocyclic compound that is cyclized through the attack of C3 hydroxyl on C14, followed by dehydration. On the other hand, neosartoricin D is a further cyclized compound in which attack of C2 on C14 in neosartoricin C results in the formation of the acetal-containing dioxabicyclo-octanone ring. Both of these compounds are novel and possibly represent related metabolites of the gene cluster. The chain is FAD-dependent monooxygenase nscC from Trichophyton equinum (strain ATCC MYA-4606 / CBS 127.97) (Horse ringworm fungus).